The primary structure comprises 626 residues: NAD-dependent malic enzyme, mitochondrial (626 aa).

Residues 1–34 (MAIFSNQMRLSSTLLKRLHQRVAAAVNSSSSRNF) constitute a mitochondrion transit peptide. Arg-91 and Arg-125 together coordinate fumarate. Tyr-146 (proton donor) is an active-site residue. Arg-199 provides a ligand contact to (S)-malate. Arg-199 provides a ligand contact to NAD(+). Catalysis depends on Lys-217, which acts as the Proton acceptor. Positions 288, 289, and 312 each coordinate a divalent metal cation. NAD(+) contacts are provided by Ala-348 and Ala-351. Residues Asn-467 and Asn-512 each coordinate (S)-malate.

It belongs to the malic enzymes family. In terms of assembly, heterodimer of two related subunits. Mg(2+) serves as cofactor. Requires Mn(2+) as cofactor.

The protein localises to the mitochondrion matrix. The enzyme catalyses (S)-malate + NAD(+) = pyruvate + CO2 + NADH. This Solanum tuberosum (Potato) protein is NAD-dependent malic enzyme, mitochondrial.